The primary structure comprises 162 residues: Single-stranded DNA-binding protein 1 (162 aa).

The region spanning 5–110 is the SSB domain; that stretch reads LNKVMLIGHL…IVCTDMQMLG (106 aa). Residues 110–162 are disordered; that stretch reads GAKDSGGGTSDASYSQNRPSYSRPSRPEPSSGNYGASPSSGGAQEFEKDDLPF. Residues 122 to 140 are compositionally biased toward low complexity; the sequence is SYSQNRPSYSRPSRPEPSS. Residues 141–151 show a composition bias toward polar residues; sequence GNYGASPSSGG.

Homotetramer.

This chain is Single-stranded DNA-binding protein 1 (ssb1), found in Chlorobaculum tepidum (strain ATCC 49652 / DSM 12025 / NBRC 103806 / TLS) (Chlorobium tepidum).